A 372-amino-acid chain; its full sequence is Aminomethyltransferase (372 aa).

The protein belongs to the GcvT family. As to quaternary structure, the glycine cleavage system is composed of four proteins: P, T, L and H.

The enzyme catalyses N(6)-[(R)-S(8)-aminomethyldihydrolipoyl]-L-lysyl-[protein] + (6S)-5,6,7,8-tetrahydrofolate = N(6)-[(R)-dihydrolipoyl]-L-lysyl-[protein] + (6R)-5,10-methylene-5,6,7,8-tetrahydrofolate + NH4(+). Functionally, the glycine cleavage system catalyzes the degradation of glycine. This Paraburkholderia phymatum (strain DSM 17167 / CIP 108236 / LMG 21445 / STM815) (Burkholderia phymatum) protein is Aminomethyltransferase.